The following is a 243-amino-acid chain: Pyridoxine 5'-phosphate synthase (243 aa).

3-amino-2-oxopropyl phosphate is bound at residue Asn9. 11–12 (DH) serves as a coordination point for 1-deoxy-D-xylulose 5-phosphate. Residue Arg20 coordinates 3-amino-2-oxopropyl phosphate. The active-site Proton acceptor is the His45. Residues Arg47 and His52 each coordinate 1-deoxy-D-xylulose 5-phosphate. Glu72 acts as the Proton acceptor in catalysis. Thr102 is a 1-deoxy-D-xylulose 5-phosphate binding site. Residue His193 is the Proton donor of the active site. Residues Gly194 and 215-216 (GH) contribute to the 3-amino-2-oxopropyl phosphate site.

Belongs to the PNP synthase family. In terms of assembly, homooctamer; tetramer of dimers.

It localises to the cytoplasm. It catalyses the reaction 3-amino-2-oxopropyl phosphate + 1-deoxy-D-xylulose 5-phosphate = pyridoxine 5'-phosphate + phosphate + 2 H2O + H(+). It functions in the pathway cofactor biosynthesis; pyridoxine 5'-phosphate biosynthesis; pyridoxine 5'-phosphate from D-erythrose 4-phosphate: step 5/5. In terms of biological role, catalyzes the complicated ring closure reaction between the two acyclic compounds 1-deoxy-D-xylulose-5-phosphate (DXP) and 3-amino-2-oxopropyl phosphate (1-amino-acetone-3-phosphate or AAP) to form pyridoxine 5'-phosphate (PNP) and inorganic phosphate. The sequence is that of Pyridoxine 5'-phosphate synthase from Salmonella typhimurium (strain LT2 / SGSC1412 / ATCC 700720).